Reading from the N-terminus, the 699-residue chain is Polyribonucleotide nucleotidyltransferase (699 aa).

Mg(2+)-binding residues include D485 and D491. The 60-residue stretch at 552 to 611 (PRITTIKINPEKIRDVIGKGGAVIRALTEETGTTIELEDDGTVKIASSNGEATKEAIRRI) folds into the KH domain. An S1 motif domain is found at 621-689 (GRIYNGKVIR…RQGRVRLSIK (69 aa)).

This sequence belongs to the polyribonucleotide nucleotidyltransferase family. Component of the RNA degradosome, which is a multiprotein complex involved in RNA processing and mRNA degradation. Requires Mg(2+) as cofactor.

Its subcellular location is the cytoplasm. The catalysed reaction is RNA(n+1) + phosphate = RNA(n) + a ribonucleoside 5'-diphosphate. Involved in mRNA degradation. Catalyzes the phosphorolysis of single-stranded polyribonucleotides processively in the 3'- to 5'-direction. The protein is Polyribonucleotide nucleotidyltransferase of Shewanella oneidensis (strain ATCC 700550 / JCM 31522 / CIP 106686 / LMG 19005 / NCIMB 14063 / MR-1).